We begin with the raw amino-acid sequence, 446 residues long: DDB1- and CUL4-associated factor 12-A (446 aa).

Positions 1-12 (MTRRSVSRKRRA) are enriched in basic residues. The interval 1 to 32 (MTRRSVSRKRRANPGSGPGEQSDWDHSAHKRK) is disordered. WD repeat units lie at residues 132 to 173 (SHQS…PVCV), 177 to 215 (GHNDWIFSIAWISDTMAVSGSRDGSMGLWEMTDEVVNKS), 245 to 284 (PVNCKVRALAFNSNNKELGAVSLDGFFHLWKAEQTLSKLL), and 333 to 370 (EQGSGIRSVSFYEHIVTVGTGQGALLFYDIRAQRFLED).

Belongs to the WD repeat DCAF12 family. As to quaternary structure, component of the DCX(DCAF12) E3 ubiquitin ligase complex, at least composed of cul4 (cul4a or cul4b), ddb1, dcaf12 and rbx1.

It localises to the cytoplasm. The protein localises to the cytoskeleton. It is found in the microtubule organizing center. Its subcellular location is the centrosome. The protein resides in the nucleus. It participates in protein modification; protein ubiquitination. In terms of biological role, substrate-recognition component of a DCX (DDB1-CUL4-X-box) E3 ubiquitin-protein ligase complex of the DesCEND (destruction via C-end degrons) pathway, which recognizes a C-degron located at the extreme C terminus of target proteins, leading to their ubiquitination and degradation. The C-degron recognized by the DesCEND pathway is usually a motif of less than ten residues and can be present in full-length proteins, truncated proteins or proteolytically cleaved forms. The DCX(DCAF12) complex specifically recognizes proteins with a diglutamate (Glu-Glu) at the C-terminus leading to their ubiquitination and degradation. Also directly recognizes the C-terminal glutamate-leucine (Glu-Leu) degron as an alternative degron in proteins leading to their ubiquitination and degradation. The protein is DDB1- and CUL4-associated factor 12-A (dcaf12-a) of Xenopus laevis (African clawed frog).